The following is a 199-amino-acid chain: MLVLGLTGSIGMGKSTTAKLFGEAGVPVYDADATVHQIYEGEAVPAIEAAFPGTTVDGKVDRALLSEKVVHDSDAMKRLEQIVHPMLRSHHQNFLDDAEASGAPVAVVDVPLLFETGGEKRVDAVVVVTTSPEVQRERILARENMTPEKLDAILARQMPDAEKRRRADFVVDTSHGLDPVRAQIREILDAAARMPRRRP.

The region spanning 3-199 (VLGLTGSIGM…AAARMPRRRP (197 aa)) is the DPCK domain. 11–16 (GMGKST) provides a ligand contact to ATP.

It belongs to the CoaE family.

Its subcellular location is the cytoplasm. It carries out the reaction 3'-dephospho-CoA + ATP = ADP + CoA + H(+). The protein operates within cofactor biosynthesis; coenzyme A biosynthesis; CoA from (R)-pantothenate: step 5/5. Functionally, catalyzes the phosphorylation of the 3'-hydroxyl group of dephosphocoenzyme A to form coenzyme A. The chain is Dephospho-CoA kinase from Rhodopseudomonas palustris (strain HaA2).